The primary structure comprises 251 residues: GTP cyclohydrolase 1 type 2 homolog (251 aa).

5 residues coordinate a divalent metal cation: histidine 64, histidine 65, aspartate 102, histidine 219, and glutamate 223.

It belongs to the GTP cyclohydrolase I type 2/NIF3 family. In terms of assembly, homohexamer.

The sequence is that of GTP cyclohydrolase 1 type 2 homolog from Chlamydia pneumoniae (Chlamydophila pneumoniae).